Here is a 264-residue protein sequence, read N- to C-terminus: Thymidylate synthase (264 aa).

Arg-21 provides a ligand contact to dUMP. His-51 provides a ligand contact to (6R)-5,10-methylene-5,6,7,8-tetrahydrofolate. 126–127 (RR) is a binding site for dUMP. Catalysis depends on Cys-146, which acts as the Nucleophile. DUMP is bound by residues 166–169 (RSVD), Asn-177, and 207–209 (HLY). Asp-169 provides a ligand contact to (6R)-5,10-methylene-5,6,7,8-tetrahydrofolate. Ala-263 contributes to the (6R)-5,10-methylene-5,6,7,8-tetrahydrofolate binding site.

The protein belongs to the thymidylate synthase family. Bacterial-type ThyA subfamily. In terms of assembly, homodimer.

The protein localises to the cytoplasm. The catalysed reaction is dUMP + (6R)-5,10-methylene-5,6,7,8-tetrahydrofolate = 7,8-dihydrofolate + dTMP. Its pathway is pyrimidine metabolism; dTTP biosynthesis. Its function is as follows. Catalyzes the reductive methylation of 2'-deoxyuridine-5'-monophosphate (dUMP) to 2'-deoxythymidine-5'-monophosphate (dTMP) while utilizing 5,10-methylenetetrahydrofolate (mTHF) as the methyl donor and reductant in the reaction, yielding dihydrofolate (DHF) as a by-product. This enzymatic reaction provides an intracellular de novo source of dTMP, an essential precursor for DNA biosynthesis. The sequence is that of Thymidylate synthase from Geobacillus sp. (strain WCH70).